A 90-amino-acid polypeptide reads, in one-letter code: uncharacterized protein (90 aa).

The signal sequence occupies residues 1 to 26 (MFESEAELRRIRIALVWIAVFLLFGA).

This is an uncharacterized protein from Bacillus subtilis (strain 168).